A 199-amino-acid polypeptide reads, in one-letter code: Streptomycin biosynthesis protein StrG (199 aa).

Its pathway is antibiotic biosynthesis; streptomycin biosynthesis. Functionally, may be involved in the formation of N-methyl-L-glucosamine. In Streptomyces griseus, this protein is Streptomycin biosynthesis protein StrG (strG).